A 370-amino-acid chain; its full sequence is uncharacterized protein (370 aa).

The protein belongs to the metallo-dependent hydrolases superfamily.

This is an uncharacterized protein from Mycobacterium bovis (strain ATCC BAA-935 / AF2122/97).